The chain runs to 344 residues: Arginine N-succinyltransferase (344 aa).

Residue Leu125 coordinates succinyl-CoA. His229 acts as the Proton donor in catalysis.

This sequence belongs to the arginine N-succinyltransferase family.

It carries out the reaction succinyl-CoA + L-arginine = N(2)-succinyl-L-arginine + CoA + H(+). Its pathway is amino-acid degradation; L-arginine degradation via AST pathway; L-glutamate and succinate from L-arginine: step 1/5. Functionally, catalyzes the transfer of succinyl-CoA to arginine to produce N(2)-succinylarginine. The sequence is that of Arginine N-succinyltransferase from Shigella sonnei (strain Ss046).